The sequence spans 114 residues: uncharacterized protein (114 aa).

This is an uncharacterized protein from Saccharomyces cerevisiae (strain ATCC 204508 / S288c) (Baker's yeast).